Here is a 300-residue protein sequence, read N- to C-terminus: tRNA pseudouridine synthase B (300 aa).

The active-site Nucleophile is Asp-38.

It belongs to the pseudouridine synthase TruB family. Type 1 subfamily.

The enzyme catalyses uridine(55) in tRNA = pseudouridine(55) in tRNA. Functionally, responsible for synthesis of pseudouridine from uracil-55 in the psi GC loop of transfer RNAs. In Dehalococcoides mccartyi (strain CBDB1), this protein is tRNA pseudouridine synthase B.